The sequence spans 528 residues: Tyrosine--tRNA ligase, cytoplasmic (528 aa).

Methionine 1 is subject to N-acetylmethionine. Glycine 2 is subject to N-acetylglycine; in Tyrosine--tRNA ligase, cytoplasmic, N-terminally processed. Tyrosine 39 is a binding site for L-tyrosine. Trans-resveratrol is bound at residue tyrosine 39. The short motif at 44–52 is the 'HIGH' region element; the sequence is TTGKPHVAY. L-tyrosine is bound by residues tyrosine 166, glutamine 170, aspartate 173, and glutamine 188. Trans-resveratrol-binding residues include glutamine 170 and aspartate 173. Lysine 197 bears the N6-acetyllysine mark. Position 205 is a phosphoserine (serine 205). Lysine 206 is modified (N6-acetyllysine). The short motif at 222–226 is the 'KMSKS' region element; sequence KMSSS. A Nuclear localization signal motif is present at residues 242–247; that stretch reads KKKLKK. Residues 339–363 are disordered; sequence AAYPDPSKQKPMAKGPAKNSEPEEV. The region spanning 364–468 is the tRNA-binding domain; sequence IPSRLDIRVG…AGSAPGEHVF (105 aa). Serine 386 is modified (phosphoserine). Residues lysine 474, lysine 482, and lysine 490 each carry the N6-acetyllysine modification.

This sequence belongs to the class-I aminoacyl-tRNA synthetase family. As to quaternary structure, homodimer. Interacts (when binding to resveratrol) with PARP1; interaction stimulates the poly-ADP-ribosyltransferase activity of PARP1.

The protein localises to the cytoplasm. It is found in the nucleus. The enzyme catalyses tRNA(Tyr) + L-tyrosine + ATP = L-tyrosyl-tRNA(Tyr) + AMP + diphosphate + H(+). Its activity is regulated as follows. Resveratrol strongly inhibits the tyrosine--tRNA ligase activity. Functionally, tyrosine--tRNA ligase that catalyzes the attachment of tyrosine to tRNA(Tyr) in a two-step reaction: tyrosine is first activated by ATP to form Tyr-AMP and then transferred to the acceptor end of tRNA(Tyr). Also acts as a positive regulator of poly-ADP-ribosylation in the nucleus, independently of its tyrosine--tRNA ligase activity. Activity is switched upon resveratrol-binding: resveratrol strongly inhibits the tyrosine--tRNA ligase activity and promotes relocalization to the nucleus, where YARS1 specifically stimulates the poly-ADP-ribosyltransferase activity of PARP1. This is Tyrosine--tRNA ligase, cytoplasmic from Homo sapiens (Human).